We begin with the raw amino-acid sequence, 266 residues long: Beta-lactamase OXA-20 (266 aa).

A signal peptide spans 1–21; it reads MIIRFLALLFSAVVLVSLGHA. The Acyl-ester intermediate role is filled by serine 72. Lysine 75 carries the N6-carboxylysine modification. Position 210–212 (210–212) interacts with substrate; sequence KTG.

This sequence belongs to the class-D beta-lactamase family.

The catalysed reaction is a beta-lactam + H2O = a substituted beta-amino acid. Its activity is regulated as follows. Inhibited by clavulanic acid. This is an oxacillin-hydrolyzing beta-lactamase. In Pseudomonas aeruginosa, this protein is Beta-lactamase OXA-20 (bla).